The primary structure comprises 427 residues: Serine--tRNA ligase (427 aa).

231-233 (TAE) is a binding site for L-serine. Residue 262-264 (RSE) coordinates ATP. An L-serine-binding site is contributed by Glu-285. Residue 349 to 352 (EISS) coordinates ATP. L-serine is bound at residue Ser-385.

The protein belongs to the class-II aminoacyl-tRNA synthetase family. Type-1 seryl-tRNA synthetase subfamily. Homodimer. The tRNA molecule binds across the dimer.

It is found in the cytoplasm. It carries out the reaction tRNA(Ser) + L-serine + ATP = L-seryl-tRNA(Ser) + AMP + diphosphate + H(+). The enzyme catalyses tRNA(Sec) + L-serine + ATP = L-seryl-tRNA(Sec) + AMP + diphosphate + H(+). Its pathway is aminoacyl-tRNA biosynthesis; selenocysteinyl-tRNA(Sec) biosynthesis; L-seryl-tRNA(Sec) from L-serine and tRNA(Sec): step 1/1. Functionally, catalyzes the attachment of serine to tRNA(Ser). Is also able to aminoacylate tRNA(Sec) with serine, to form the misacylated tRNA L-seryl-tRNA(Sec), which will be further converted into selenocysteinyl-tRNA(Sec). The protein is Serine--tRNA ligase of Listeria monocytogenes serotype 4b (strain CLIP80459).